An 852-amino-acid chain; its full sequence is Leucine--tRNA ligase (852 aa).

The 'HIGH' region motif lies at 42-52 (PYPSGKLHMGH). The disordered stretch occupies residues 586–606 (NKYVPADQVDPNDPKDPETGE). The 'KMSKS' region motif lies at 614 to 618 (KMSKS). ATP is bound at residue Lys617.

Belongs to the class-I aminoacyl-tRNA synthetase family.

It is found in the cytoplasm. It catalyses the reaction tRNA(Leu) + L-leucine + ATP = L-leucyl-tRNA(Leu) + AMP + diphosphate. This chain is Leucine--tRNA ligase, found in Picosynechococcus sp. (strain ATCC 27264 / PCC 7002 / PR-6) (Agmenellum quadruplicatum).